A 143-amino-acid polypeptide reads, in one-letter code: MFMGEFEHSLDSKGRLIIPSKFRDQLDSNFVVTRGLDGCLFVYPLSEWRLVEEKLSQLPSNKKNNRAFVRFMFADAVQCDFDKQGRIIIPKKLRLHAELQKECVLVGVSNRVEIWNKARWEETIEETEENFDDIAENLIDFGL.

SpoVT-AbrB domains follow at residues 5–47 (EFEH…PLSE) and 76–119 (AVQC…NKAR).

This sequence belongs to the MraZ family. In terms of assembly, forms oligomers.

The protein localises to the cytoplasm. It localises to the nucleoid. The sequence is that of Transcriptional regulator MraZ from Pediococcus pentosaceus (strain ATCC 25745 / CCUG 21536 / LMG 10740 / 183-1w).